A 557-amino-acid chain; its full sequence is Probable phenylalanine--tRNA ligase beta subunit (557 aa).

In terms of domain architecture, B5 spans methionine 276–arginine 352. Residues aspartate 330, aspartate 336, glutamate 339, and aspartate 340 each contribute to the Mg(2+) site.

This sequence belongs to the phenylalanyl-tRNA synthetase beta subunit family. Type 2 subfamily. In terms of assembly, tetramer of two alpha and two beta subunits. Mg(2+) serves as cofactor.

It localises to the cytoplasm. It catalyses the reaction tRNA(Phe) + L-phenylalanine + ATP = L-phenylalanyl-tRNA(Phe) + AMP + diphosphate + H(+). This chain is Probable phenylalanine--tRNA ligase beta subunit, found in Encephalitozoon cuniculi (strain GB-M1) (Microsporidian parasite).